A 139-amino-acid polypeptide reads, in one-letter code: Aspartate 1-decarboxylase (139 aa).

Ser26 functions as the Schiff-base intermediate with substrate; via pyruvic acid in the catalytic mechanism. Position 26 is a pyruvic acid (Ser) (Ser26). Thr58 contacts substrate. The active-site Proton donor is the Tyr59. Residue 72–74 coordinates substrate; the sequence is GGA.

Belongs to the PanD family. In terms of assembly, heterooctamer of four alpha and four beta subunits. It depends on pyruvate as a cofactor. Is synthesized initially as an inactive proenzyme, which is activated by self-cleavage at a specific serine bond to produce a beta-subunit with a hydroxyl group at its C-terminus and an alpha-subunit with a pyruvoyl group at its N-terminus.

Its subcellular location is the cytoplasm. The catalysed reaction is L-aspartate + H(+) = beta-alanine + CO2. It functions in the pathway cofactor biosynthesis; (R)-pantothenate biosynthesis; beta-alanine from L-aspartate: step 1/1. In terms of biological role, catalyzes the pyruvoyl-dependent decarboxylation of aspartate to produce beta-alanine. In Microcystis aeruginosa (strain NIES-843 / IAM M-2473), this protein is Aspartate 1-decarboxylase.